Here is a 207-residue protein sequence, read N- to C-terminus: MTGFSVSLFVSNLSNVASYLSPIFENIPSTKVVPAQIEKVVSLVSRTGRDLQRYDHAGYRQVVGCVPYRYKKQEVNGVETQVIQVLLVSAQKGKGMLFPKGGWETDESMEEAALRETIEEAGVTGELEEKLGKWQYKSKRHSIIHDGYMFALLVSQEFERWPEAEMRQRRWVSLDEAREVCQNWWMREALEAFINLKCLADDDESGN.

Positions 58 to 194 (GYRQVVGCVP…WMREALEAFI (137 aa)) constitute a Nudix hydrolase domain. Positions 101 to 122 (GGWETDESMEEAALRETIEEAG) match the Nudix box motif. Residues E116 and E120 each coordinate Mg(2+).

Belongs to the Nudix hydrolase family. Requires Mg(2+) as cofactor. It depends on Mn(2+) as a cofactor. As to expression, expressed in roots, stems and leaves.

It catalyses the reaction ADP-D-ribose + H2O = D-ribose 5-phosphate + AMP + 2 H(+). The enzyme catalyses NAD(+) + H2O = beta-nicotinamide D-ribonucleotide + AMP + 2 H(+). It carries out the reaction NADH + H2O = reduced beta-nicotinamide D-ribonucleotide + AMP + 2 H(+). In terms of biological role, probably mediates the hydrolysis of some nucleoside diphosphate derivatives. In vitro, it can use both NADH and ADP-ribose as substrates; however the relevance of such substrates in vivo is unclear. This Arabidopsis thaliana (Mouse-ear cress) protein is Nudix hydrolase 4 (NUDT4).